Here is a 228-residue protein sequence, read N- to C-terminus: MADS-box transcription factor 22 (228 aa).

Residues 1 to 61 form the MADS-box domain; the sequence is MARERREIKR…GKLSHFASSS (61 aa). The K-box domain maps to 86 to 176; sequence LNLEHSKYAH…RNQVSQISPA (91 aa). Positions 189–217 are disordered; the sequence is EGQSSESVMTALHSGSSQSQDNDDGSDVS.

In terms of tissue distribution, expressed in palea and stamen primordia. Expressed in shoots and coleoptiles.

It is found in the nucleus. Probable transcription factor. May be required for spikelet (rice flower) development. Transcription factor that functions to support the MADS55 in its function as negative regulator of brassinosteroid signaling. This is MADS-box transcription factor 22 (MADS22) from Oryza sativa subsp. japonica (Rice).